The following is a 317-amino-acid chain: Malate dehydrogenase (317 aa).

8–14 (GATGRVG) provides a ligand contact to NADP(+). Residues Arg85 and Arg91 each contribute to the substrate site. Residues Asn98 and 121 to 123 (VTN) contribute to the NADP(+) site. Residues Asn123 and Arg154 each contribute to the substrate site. The active-site Proton acceptor is the His178.

This sequence belongs to the LDH/MDH superfamily.

The catalysed reaction is (S)-malate + NADP(+) = oxaloacetate + NADPH + H(+). It carries out the reaction (S)-malate + NAD(+) = oxaloacetate + NADH + H(+). Functionally, catalyzes the reversible oxidation of malate to oxaloacetate. This is Malate dehydrogenase (mdh) from Methanopyrus kandleri (strain AV19 / DSM 6324 / JCM 9639 / NBRC 100938).